The sequence spans 123 residues: Large ribosomal subunit protein uL14 (123 aa).

The protein belongs to the universal ribosomal protein uL14 family. As to quaternary structure, part of the 50S ribosomal subunit. Forms a cluster with proteins L3 and L19. In the 70S ribosome, L14 and L19 interact and together make contacts with the 16S rRNA in bridges B5 and B8.

Functionally, binds to 23S rRNA. Forms part of two intersubunit bridges in the 70S ribosome. This chain is Large ribosomal subunit protein uL14, found in Serratia proteamaculans (strain 568).